Reading from the N-terminus, the 230-residue chain is MEGLTDRQLEVLRFIASQIEDHGYPPTIREIGEALDIRSTNGVNDHLKALERKGYLSRDPVKSRALIPTSAAREALGGGGGDAGSNVVPLVRGPARPGSRMIEIPIVGRVAAGMPILAQERVEDTVQVDAFLLGTNKKVYGLRVQGDSMIGDGILPGDYVFVKKQLNADDGEIVVAMIDDEATVKRVYFEGDRVRFQPSNPRMAPIYVRHSDFRSTMILGVVVGVYRKLT.

The H-T-H motif DNA-binding region spans 28–48 (IREIGEALDIRSTNGVNDHLK). Residues S148 and K185 each act as for autocatalytic cleavage activity in the active site.

Belongs to the peptidase S24 family. Homodimer.

The enzyme catalyses Hydrolysis of Ala-|-Gly bond in repressor LexA.. Functionally, represses a number of genes involved in the response to DNA damage (SOS response), including recA and lexA. In the presence of single-stranded DNA, RecA interacts with LexA causing an autocatalytic cleavage which disrupts the DNA-binding part of LexA, leading to derepression of the SOS regulon and eventually DNA repair. This is LexA repressor from Anaeromyxobacter sp. (strain K).